The chain runs to 260 residues: Small ribosomal subunit protein uS2 (260 aa).

It belongs to the universal ribosomal protein uS2 family.

This is Small ribosomal subunit protein uS2 from Streptococcus sanguinis (strain SK36).